The following is a 208-amino-acid chain: Probable GTP-binding protein EngB (208 aa).

Positions 22–195 (GLPEIALAGR…WGALEDIFVE (174 aa)) constitute an EngB-type G domain. Residues 30 to 37 (GRSNVGKS), 57 to 61 (GKTRT), 75 to 78 (DLPG), 142 to 145 (TKSD), and 174 to 176 (ISS) contribute to the GTP site. Positions 37 and 59 each coordinate Mg(2+).

It belongs to the TRAFAC class TrmE-Era-EngA-EngB-Septin-like GTPase superfamily. EngB GTPase family. Requires Mg(2+) as cofactor.

Necessary for normal cell division and for the maintenance of normal septation. This chain is Probable GTP-binding protein EngB, found in Alkaliphilus metalliredigens (strain QYMF).